Here is a 343-residue protein sequence, read N- to C-terminus: GDSL esterase/lipase EXL6 (343 aa).

The signal sequence occupies residues 1–21 (MFRGKIFVLSLFSIYVLSSAA). Residue N24 is glycosylated (N-linked (GlcNAc...) asparagine). The active-site Nucleophile is S36. Residues D318 and H321 contribute to the active site.

Belongs to the 'GDSL' lipolytic enzyme family. Flower buds and pollen.

The protein localises to the secreted. Its subcellular location is the extracellular space. The protein resides in the extracellular matrix. It localises to the pollen coat. Its function is as follows. Required for the formation of pollen coats and male fertility. In Arabidopsis thaliana (Mouse-ear cress), this protein is GDSL esterase/lipase EXL6 (EXL6).